The sequence spans 153 residues: Gastric inhibitory polypeptide (153 aa).

Residues 1 to 21 form the signal peptide; sequence MVATKTFALLLLSLFLAVGLG. 2 consecutive propeptides follow at residues 22–50 and 95–153; these read EKKE…PRGP and EARA…LRSR. Residues 102–125 form a disordered region; it reads ASQANRKEEEAVEPQSSPAKNPSD.

Belongs to the glucagon family.

The protein resides in the secreted. Potent stimulator of insulin secretion and relatively poor inhibitor of gastric acid secretion. The polypeptide is Gastric inhibitory polypeptide (GIP) (Homo sapiens (Human)).